The following is a 511-amino-acid chain: Histidine ammonia-lyase (511 aa).

Residues 142–144 (ASG) constitute a cross-link (5-imidazolinone (Ala-Gly)). The residue at position 143 (S143) is a 2,3-didehydroalanine (Ser).

The protein belongs to the PAL/histidase family. Post-translationally, contains an active site 4-methylidene-imidazol-5-one (MIO), which is formed autocatalytically by cyclization and dehydration of residues Ala-Ser-Gly.

It is found in the cytoplasm. It carries out the reaction L-histidine = trans-urocanate + NH4(+). It functions in the pathway amino-acid degradation; L-histidine degradation into L-glutamate; N-formimidoyl-L-glutamate from L-histidine: step 1/3. This is Histidine ammonia-lyase from Brucella anthropi (strain ATCC 49188 / DSM 6882 / CCUG 24695 / JCM 21032 / LMG 3331 / NBRC 15819 / NCTC 12168 / Alc 37) (Ochrobactrum anthropi).